The following is a 110-amino-acid chain: Large ribosomal subunit protein uL22 (110 aa).

This sequence belongs to the universal ribosomal protein uL22 family. In terms of assembly, part of the 50S ribosomal subunit.

In terms of biological role, this protein binds specifically to 23S rRNA; its binding is stimulated by other ribosomal proteins, e.g. L4, L17, and L20. It is important during the early stages of 50S assembly. It makes multiple contacts with different domains of the 23S rRNA in the assembled 50S subunit and ribosome. Its function is as follows. The globular domain of the protein is located near the polypeptide exit tunnel on the outside of the subunit, while an extended beta-hairpin is found that lines the wall of the exit tunnel in the center of the 70S ribosome. This is Large ribosomal subunit protein uL22 from Exiguobacterium sibiricum (strain DSM 17290 / CCUG 55495 / CIP 109462 / JCM 13490 / 255-15).